Reading from the N-terminus, the 91-residue chain is MSRSLKKGPFIADHLLKKIEALNAKNEKQVIKTWSRSSTIIPDMVGHTIAVHNGRQHVPVFISDQMVGHKLGEFAPTRTYRGHGSDKKSKR.

It belongs to the universal ribosomal protein uS19 family.

Its function is as follows. Protein S19 forms a complex with S13 that binds strongly to the 16S ribosomal RNA. The polypeptide is Small ribosomal subunit protein uS19 (Trichodesmium erythraeum (strain IMS101)).